Here is a 166-residue protein sequence, read N- to C-terminus: Replication restart protein DnaT (166 aa).

Belongs to the DnaT family. Homooligomerizes. Interacts with PriB. Component of the replication restart primosome. Primosome assembly occurs via a 'hand-off' mechanism. PriA binds to replication forks, subsequently PriB then DnaT bind; DnaT then displaces ssDNA to generate the helicase loading substrate.

Functionally, involved in the restart of stalled replication forks, which reloads the replicative helicase on sites other than the origin of replication. Can function in multiple replication restart pathways. Displaces ssDNA from a PriB-ssDNA complex. Probably forms a spiral filament on ssDNA. The protein is Replication restart protein DnaT of Buchnera aphidicola subsp. Schizaphis graminum (strain Sg).